The chain runs to 337 residues: Protein MICROTUBULE BINDING PROTEIN 2C (337 aa).

Positions 80–147 (RGSMTYTKMP…STSSLTEKDR (68 aa)) are disordered. Residues 89–103 (PSRESLYKKTSEVKG) are compositionally biased toward basic and acidic residues. Residues 120–142 (KNVSSSQDGYAENFSTPSSTSSL) are compositionally biased toward polar residues. 3 coiled-coil regions span residues 143–194 (TEKD…MKKD), 223–250 (VEKL…LQGE), and 294–314 (LQKM…AKEN).

It belongs to the microtubule binding protein 2C family. Interacts with KN-1. Binds to tobacco mosaic virus movement protein (TMV-MP) at microtubules. In terms of tissue distribution, constitutively expressed in leaves.

It is found in the cytoplasm. It localises to the cytoskeleton. Prevents homeodomain proteins (e.g. STM) association to plasmodesmata and, consequently, cell-to-cell transport. Binds to RNA. Alters KN1 RNA-binding capacity. Regulates cytoskeleton (e.g. actin) organization that determinates cell shape. Interferes with cell-to-cell transport of tobacco mosaic virus movement protein (TMV-MP) by mediating its accumulation at microtubules, thus interfering with cell-to-cell virus movement. The sequence is that of Protein MICROTUBULE BINDING PROTEIN 2C from Nicotiana tabacum (Common tobacco).